The primary structure comprises 137 residues: Small ribosomal subunit protein uS12 (137 aa).

The residue at position 102 (D102) is a 3-methylthioaspartic acid.

This sequence belongs to the universal ribosomal protein uS12 family. In terms of assembly, part of the 30S ribosomal subunit. Contacts proteins S8 and S17. May interact with IF1 in the 30S initiation complex.

Its function is as follows. With S4 and S5 plays an important role in translational accuracy. Functionally, interacts with and stabilizes bases of the 16S rRNA that are involved in tRNA selection in the A site and with the mRNA backbone. Located at the interface of the 30S and 50S subunits, it traverses the body of the 30S subunit contacting proteins on the other side and probably holding the rRNA structure together. The combined cluster of proteins S8, S12 and S17 appears to hold together the shoulder and platform of the 30S subunit. The protein is Small ribosomal subunit protein uS12 of Mycoplasmopsis agalactiae (strain NCTC 10123 / CIP 59.7 / PG2) (Mycoplasma agalactiae).